Consider the following 214-residue polypeptide: ATP phosphoribosyltransferase (214 aa).

It belongs to the ATP phosphoribosyltransferase family. Short subfamily. As to quaternary structure, heteromultimer composed of HisG and HisZ subunits.

It localises to the cytoplasm. The catalysed reaction is 1-(5-phospho-beta-D-ribosyl)-ATP + diphosphate = 5-phospho-alpha-D-ribose 1-diphosphate + ATP. Its pathway is amino-acid biosynthesis; L-histidine biosynthesis; L-histidine from 5-phospho-alpha-D-ribose 1-diphosphate: step 1/9. Functionally, catalyzes the condensation of ATP and 5-phosphoribose 1-diphosphate to form N'-(5'-phosphoribosyl)-ATP (PR-ATP). Has a crucial role in the pathway because the rate of histidine biosynthesis seems to be controlled primarily by regulation of HisG enzymatic activity. The protein is ATP phosphoribosyltransferase of Lysinibacillus sphaericus (strain C3-41).